A 138-amino-acid polypeptide reads, in one-letter code: ATP synthase epsilon chain (138 aa).

Residues 89 to 114 (KDTAQQEWNEAQKRLDEASKSGDRQK) show a composition bias toward basic and acidic residues. The disordered stretch occupies residues 89–117 (KDTAQQEWNEAQKRLDEASKSGDRQKQIQ).

This sequence belongs to the ATPase epsilon chain family. F-type ATPases have 2 components, CF(1) - the catalytic core - and CF(0) - the membrane proton channel. CF(1) has five subunits: alpha(3), beta(3), gamma(1), delta(1), epsilon(1). CF(0) has three main subunits: a, b and c.

It localises to the cellular thylakoid membrane. Functionally, produces ATP from ADP in the presence of a proton gradient across the membrane. This chain is ATP synthase epsilon chain, found in Gloeothece citriformis (strain PCC 7424) (Cyanothece sp. (strain PCC 7424)).